Here is a 95-residue protein sequence, read N- to C-terminus: Large ribosomal subunit protein uL23 (95 aa).

It belongs to the universal ribosomal protein uL23 family. In terms of assembly, part of the 50S ribosomal subunit. Contacts protein L29, and trigger factor when it is bound to the ribosome.

In terms of biological role, one of the early assembly proteins it binds 23S rRNA. One of the proteins that surrounds the polypeptide exit tunnel on the outside of the ribosome. Forms the main docking site for trigger factor binding to the ribosome. In Desulforamulus reducens (strain ATCC BAA-1160 / DSM 100696 / MI-1) (Desulfotomaculum reducens), this protein is Large ribosomal subunit protein uL23.